We begin with the raw amino-acid sequence, 280 residues long: Cytochrome bc1 complex cytochrome c subunit (280 aa).

A helical membrane pass occupies residues 25-45 (LSGGVLLLIALTIAGGLAAVL). 2 consecutive Cytochrome c domains span residues 60-140 (ALLR…QANG) and 161-239 (NDLG…KVAT). Heme c contacts are provided by Cys-73, Cys-76, His-77, Cys-174, Cys-177, and His-178. The helical transmembrane segment at 258-278 (GMAMWIIGMVAAIGLALWIGA) threads the bilayer.

As to quaternary structure, the cytochrome bc1 complex is composed of a cytochrome b (QcrB), the Rieske iron-sulfur protein (QcrA) and a diheme cytochrome c (QcrC) subunit. Binds 2 heme c groups covalently per subunit.

It localises to the cell membrane. It catalyses the reaction a quinol + 2 Fe(III)-[cytochrome c](out) = a quinone + 2 Fe(II)-[cytochrome c](out) + 2 H(+)(out). Functionally, cytochrome b subunit of the cytochrome bc1 complex, an essential component of the respiratory electron transport chain required for ATP synthesis. The bc1 complex catalyzes the oxidation of ubiquinol and the reduction of cytochrome c in the respiratory chain. The bc1 complex operates through a Q-cycle mechanism that couples electron transfer to generation of the proton gradient that drives ATP synthesis. The protein is Cytochrome bc1 complex cytochrome c subunit (qcrC) of Mycobacterium bovis (strain ATCC BAA-935 / AF2122/97).